Here is a 385-residue protein sequence, read N- to C-terminus: MAAGTSIGTTPGGSTSPETPPEHGLTGTVISVDAMGGDTGPAAVVGGLAIAAEKNPDIAFLLHGDATELTALVAKRRALDGRVAIRGTSDVVTMHDKPSQVMRGGKDTSMWSAIDAVRNGEATVCVSCGNTGALMALSMVRLRKVPGINRPAIACLWPSRAKSGFNVMLDVGADIKADAQDLLQYALMGASYARNGLGNPTPRIGLLNVGTEEHKGRAELKAAHDLIAQAAPDNDFEFVGFVEGGDIPSDKVDVIVTDGFTGNVALKTAEGTAALIRDFLTQAFEKTPWSKIAAMLAYTSLRRLSKRIDPRRVNGGVFLGLNGTVVKSHGSADATGVAAAIKLAFILAQSGFTERLAARVASAGRARASGAATPEEEAVSGSANG.

Positions 1 to 17 (MAAGTSIGTTPGGSTSP) are enriched in low complexity. The interval 1-28 (MAAGTSIGTTPGGSTSPETPPEHGLTGT) is disordered.

It belongs to the PlsX family. Homodimer. Probably interacts with PlsY.

It localises to the cytoplasm. The enzyme catalyses a fatty acyl-[ACP] + phosphate = an acyl phosphate + holo-[ACP]. Its pathway is lipid metabolism; phospholipid metabolism. Catalyzes the reversible formation of acyl-phosphate (acyl-PO(4)) from acyl-[acyl-carrier-protein] (acyl-ACP). This enzyme utilizes acyl-ACP as fatty acyl donor, but not acyl-CoA. The polypeptide is Phosphate acyltransferase (Dinoroseobacter shibae (strain DSM 16493 / NCIMB 14021 / DFL 12)).